A 903-amino-acid polypeptide reads, in one-letter code: Chitin synthase 1 (903 aa).

A disordered region spans residues 1 to 154 (MDPRYGAQPQ…YQDQPQQGGG (154 aa)). Positions 67–79 (DHLNLNAAQSVDN) are enriched in polar residues. Asn79 is a glycosylation site (N-linked (GlcNAc...) asparagine). Residues 100–117 (YYNQPYEPRPQQQPYDQG) are compositionally biased toward low complexity. The segment covering 135–150 (HQPSDAPSEPYQDQPQ) has biased composition (polar residues). Transmembrane regions (helical) follow at residues 444-464 (SAFGFISVLPGAFSAYRYVAL), 543-563 (RWLNGSFFAAIYAIVHFLDFL), 573-593 (FAFFIEFIFNTINMIFAWFAI), 619-639 (ILGVVFTWLYGVFLITCFVLS), 654-674 (MCWFWAIIMIYLLFAAIFIAV), 700-720 (MLIISVMSTFGIWLIASLIML), 729-749 (LVQYMLLTPTFTNVLNVYAFC), 828-848 (GVVLIWMVSNFGLAALVLSSA), and 875-895 (IVLWSVAGLSAFKFIGAMWFL).

The protein belongs to the chitin synthase family. Class I subfamily.

Its subcellular location is the cell membrane. It catalyses the reaction [(1-&gt;4)-N-acetyl-beta-D-glucosaminyl](n) + UDP-N-acetyl-alpha-D-glucosamine = [(1-&gt;4)-N-acetyl-beta-D-glucosaminyl](n+1) + UDP + H(+). In terms of biological role, polymerizes chitin, a structural polymer of the cell wall and septum, by transferring the sugar moiety of UDP-GlcNAc to the non-reducing end of the growing chitin polymer. Plays an important role in nuclear sorting or distribution. In Fusarium oxysporum f. sp. lycopersici (strain 4287 / CBS 123668 / FGSC 9935 / NRRL 34936) (Fusarium vascular wilt of tomato), this protein is Chitin synthase 1.